Here is a 168-residue protein sequence, read N- to C-terminus: Ubiquitin-fold modifier-conjugating enzyme 1 (168 aa).

The Glycyl thioester intermediate role is filled by cysteine 116.

This sequence belongs to the ubiquitin-conjugating enzyme family. UFC1 subfamily.

Functionally, E2-like enzyme which forms an intermediate with UFM1 via a thioester linkage. This Trichoplax adhaerens (Trichoplax reptans) protein is Ubiquitin-fold modifier-conjugating enzyme 1.